We begin with the raw amino-acid sequence, 1978 residues long: Sodium channel protein type 8 subunit alpha (1978 aa).

Disordered stretches follow at residues 1–20 and 28–62; these read MAAR…FTPE and RIAE…LEAG. Topologically, residues 1-132 are cytoplasmic; the sequence is MAARLLAPPG…RIAIKILIHS (132 aa). Residues 28–61 show a composition bias toward basic and acidic residues; it reads RIAESKLKKPPKADGSHREDDEDSKPKPNSDLEA. Residues 114 to 442 form an I repeat; the sequence is ILSPFNLIRR…KAMLEQLKKQ (329 aa). A helical transmembrane segment spans residues 133 to 151; that stretch reads VFSMIIMCTILTNCVFMTF. The Extracellular segment spans residues 152–158; that stretch reads SNPPEWS. Residues 159–179 form a helical membrane-spanning segment; the sequence is KNVEYTFTGIYTFESLVKIIA. The Cytoplasmic segment spans residues 180–193; the sequence is RGFCIDGFTFLRDP. Residues 194–211 form a helical membrane-spanning segment; that stretch reads WNWLDFSVIMMAYVTEFV. Residues 212–217 lie on the Extracellular side of the membrane; the sequence is DLGNVS. Residue N215 is glycosylated (N-linked (GlcNAc...) asparagine). The chain crosses the membrane as a helical span at residues 218-234; sequence ALRTFRVLRALKTISVI. The Cytoplasmic segment spans residues 235 to 253; it reads PGLKTIVGALIQSVKKLSD. The helical transmembrane segment at 254–273 threads the bilayer; it reads VMILTVFCLSVFALIGLQLF. At 274-355 the chain is on the extracellular side; sequence MGNLRNKCVV…PNYGYTSFDT (82 aa). C281 and C333 are joined by a disulfide. N-linked (GlcNAc...) asparagine glycans are attached at residues N289, N295, N308, and N326. The pore-forming intramembrane region spans 356 to 380; it reads FSWAFLALFRLMTQDYWENLYQLTL. E373 provides a ligand contact to Na(+). Topologically, residues 381–387 are extracellular; that stretch reads RAAGKTY. The chain crosses the membrane as a helical span at residues 388-408; the sequence is MIFFVLVIFVGSFYLVNLILA. Topologically, residues 409-751 are cytoplasmic; the sequence is VVAMAYEEQN…EIVNLIVMDP (343 aa). Disordered regions lie at residues 446 to 530 and 576 to 597; these read AQAA…KAFR and DPGS…SEGR. Over residues 473–486 the composition is skewed to low complexity; the sequence is SPRSSSELSKLSSK. Residues 489 to 500 show a composition bias toward basic residues; that stretch reads KERRNRRKKRKQ. 2 stretches are compositionally biased toward basic and acidic residues: residues 501–530 and 586–597; these read KELS…KAFR and DEHSTVEESEGR. 2 positions are modified to phosphoserine: S518 and S520. Residues 733–1005 form an II repeat; that stretch reads CHPYWIKLKE…QISVIRIKKG (273 aa). Residues 752-770 traverse the membrane as a helical segment; sequence FVDLAITICIVLNTLFMAM. Over 771–781 the chain is Extracellular; sequence EHHPMTPQFEH. Residues 782 to 801 form a helical membrane-spanning segment; the sequence is VLAVGNLVFTGIFTAEMFLK. At 802–815 the chain is on the cytoplasmic side; the sequence is LIAMDPYYYFQEGW. A helical membrane pass occupies residues 816–835; that stretch reads NIFDGFIVSLSLMELSLADV. At 836–837 the chain is on the extracellular side; that stretch reads EG. A helical membrane pass occupies residues 838–855; that stretch reads LSVLRSFRLLRVFKLAKS. Topologically, residues 856 to 871 are cytoplasmic; sequence WPTLNMLIKIIGNSVG. Residues 872–890 form a helical membrane-spanning segment; the sequence is ALGNLTLVLAIIVFIFAVV. Residues 891 to 919 lie on the Extracellular side of the membrane; that stretch reads GMQLFGKSYKECVCKINQECKLPRWHMND. A disulfide bridge links C904 with C910. The pore-forming intramembrane region spans 920-940; that stretch reads FFHSFLIVFRVLCGEWIETMW. The Na(+) site is built by E934 and E937. The Extracellular segment spans residues 941–953; that stretch reads DCMEVAGQAMCLI. C942 and C951 are joined by a disulfide. The chain crosses the membrane as a helical span at residues 954-974; it reads VFMMVMVIGNLVVLNLFLALL. At 975-1197 the chain is on the cytoplasmic side; it reads LSSFSADNLA…TCFLIVEHNW (223 aa). Residues 1105-1146 are disordered; it reads NLNTEDVSSESDPEGSKDKLDDTSSSEGSTIDIKPEVEEVPV. The stretch at 1178–1493 is one III repeat; it reads LGKSWWILRK…KKYYNAMKKL (316 aa). The chain crosses the membrane as a helical span at residues 1198–1215; sequence FETFIIFMILLSSGALAF. Topologically, residues 1216 to 1228 are extracellular; the sequence is EDIYIEQRKTIRT. The helical transmembrane segment at 1229–1247 threads the bilayer; sequence ILEYADKVFTYIFILEMLL. Over 1248–1261 the chain is Cytoplasmic; the sequence is KWTAYGFVKFFTNA. The helical transmembrane segment at 1262-1280 threads the bilayer; sequence WCWLDFLIVAVSLVSLIAN. The Extracellular segment spans residues 1281–1288; the sequence is ALGYSELG. A helical membrane pass occupies residues 1289-1307; that stretch reads AIKSLRTLRALRPLRALSR. The Cytoplasmic segment spans residues 1308–1324; sequence FEGMRVVVNALVGAIPS. The chain crosses the membrane as a helical span at residues 1325–1344; it reads IMNVLLVCLIFWLIFSIMGV. Residues 1345-1397 are Extracellular-facing; that stretch reads NLFAGKYHYCFNETSEIRFEIDIVNNKTDCEKLMEGNSTEIRWKNVKINFDNV. An intrachain disulfide couples C1354 to C1374. N-linked (GlcNAc...) asparagine glycosylation is found at N1356, N1370, and N1381. Residues 1398–1419 constitute an intramembrane region (pore-forming); the sequence is GAGYLALLQVATFKGWMDIMYA. Over 1420–1436 the chain is Extracellular; sequence AVDSRKPDEQPDYEGNI. The helical transmembrane segment at 1437-1458 threads the bilayer; it reads YMYIYFVIFIIFGSFFTLNLFI. At 1459–1521 the chain is on the cytoplasmic side; it reads GVIIDNFNQQ…IVFDFVTQQA (63 aa). Position 1495 is a phosphoserine; by PKC (S1495). Residues 1502–1799 form an IV repeat; that stretch reads IPRPLNKIQG…WEKFDPDATQ (298 aa). The chain crosses the membrane as a helical span at residues 1522 to 1539; that stretch reads FDIVIMMLICLNMVTMMV. Residues 1540–1550 are Extracellular-facing; sequence ETDTQSKQMEN. A helical membrane pass occupies residues 1551 to 1569; that stretch reads ILYWINLVFVIFFTCECVL. The Cytoplasmic portion of the chain corresponds to 1570-1581; the sequence is KMFALRHYYFTI. Residues 1582–1599 traverse the membrane as a helical segment; that stretch reads GWNIFDFVVVILSIVGMF. Residues 1600-1612 lie on the Extracellular side of the membrane; it reads LADIIEKYFVSPT. The helical transmembrane segment at 1613 to 1629 threads the bilayer; it reads LFRVIRLARIGRILRLI. Topologically, residues 1630–1648 are cytoplasmic; it reads KGAKGIRTLLFALMMSLPA. The helical transmembrane segment at 1649–1666 threads the bilayer; it reads LFNIGLLLFLVMFIFSIF. The Extracellular segment spans residues 1667–1688; it reads GMSNFAYVKHEAGIDDMFNFET. An intramembrane region (pore-forming) is located at residues 1689–1711; it reads FGNSMICLFQITTSAGWDGLLLP. Over 1712–1740 the chain is Extracellular; it reads ILNRPPDCSLDKEHPGSGFKGDCGNPSVG. An intrachain disulfide couples C1719 to C1734. The chain crosses the membrane as a helical span at residues 1741-1763; the sequence is IFFFVSYIIISFLIVVNMYIAII. Over 1764–1978 the chain is Cytoplasmic; sequence LENFSVATEE…RQKEVRESKC (215 aa). Positions 1893–1922 constitute an IQ domain; that stretch reads EEVSAVVLQRAYRGHLARRGFICRKMASNK. A disordered region spans residues 1923–1978; that stretch reads LENGGTHRDKKESTPSTASLPSYDSVTKPDKEKQQRAEEGRRERAKRQKEVRESKC. Polar residues predominate over residues 1936–1947; the sequence is TPSTASLPSYDS. Residues 1949–1978 are compositionally biased toward basic and acidic residues; sequence TKPDKEKQQRAEEGRRERAKRQKEVRESKC.

This sequence belongs to the sodium channel (TC 1.A.1.10) family. Nav1.6/SCN8A subfamily. As to quaternary structure, the voltage-sensitive sodium channel consists of an ion-conducting pore-forming alpha subunit regulated by one or more beta-1 (SCN1B), beta-2 (SCN2B), beta-3 (SCN3B) and/or beta-4 (SCN4B) subunits. Beta-1 (SCN1B) and beta-3 (SCN3B) are non-covalently associated with alpha, while beta-2 (SCN2B) and beta-4 (SCN4B) are covalently linked by disulfide bonds. Interacts with NEDD4 and NEDD4L. Interacts with FGF13. Interacts with FGF14, GBG3, GBB2 and SCN1B. Interacts with TMEM233. Interacts with the conotoxin GVIIJ. Interacts with CALM1; the interaction modulates the inactivation rate of SCN8A. May be ubiquitinated by NEDD4L; which would promote its endocytosis. Post-translationally, phosphorylation at Ser-1495 by PKC in a highly conserved cytoplasmic loop slows inactivation of the sodium channel and reduces peak sodium currents. Isoform 1 is highly expressed in brain, moderately in spinal cord, and at low levels in dorsal root ganglia, nodose ganglia and superior cervical ganglia. Not detected in sciatic nerve and non-neuronal tissues. Isoform 2 is hardly detectable, if at all, in brain, expressed at low levels in spinal cord and at highest levels in dorsal root ganglia.

The protein localises to the cell membrane. It localises to the cell projection. The protein resides in the axon. It carries out the reaction Na(+)(in) = Na(+)(out). Pore-forming subunit of a voltage-gated sodium channel complex assuming opened or closed conformations in response to the voltage difference across membranes and through which sodium ions selectively pass along their electrochemical gradient. Contributes to neuronal excitability by regulating action potential threshold and propagation. The protein is Sodium channel protein type 8 subunit alpha of Rattus norvegicus (Rat).